Here is a 558-residue protein sequence, read N- to C-terminus: DNA ligase B (558 aa).

Lys-126 (N6-AMP-lysine intermediate) is an active-site residue.

It belongs to the NAD-dependent DNA ligase family. LigB subfamily.

It catalyses the reaction NAD(+) + (deoxyribonucleotide)n-3'-hydroxyl + 5'-phospho-(deoxyribonucleotide)m = (deoxyribonucleotide)n+m + AMP + beta-nicotinamide D-nucleotide.. Functionally, catalyzes the formation of phosphodiester linkages between 5'-phosphoryl and 3'-hydroxyl groups in double-stranded DNA using NAD as a coenzyme and as the energy source for the reaction. This chain is DNA ligase B, found in Pseudomonas fluorescens (strain Pf0-1).